Consider the following 510-residue polypeptide: Anaerobic nitric oxide reductase transcription regulator NorR (510 aa).

The Sigma-54 factor interaction domain occupies 188 to 417; sequence IIGNSQGMRT…LEHVIKRAAV (230 aa). Residues 216–223 and 279–288 contribute to the ATP site; these read GETGVGKE and ADGGTLFLDE. A DNA-binding region (H-T-H motif) is located at residues 486–505; the sequence is WAATARQLELDSGNLHRLAK.

The protein operates within nitrogen metabolism; nitric oxide reduction. Functionally, required for the expression of anaerobic nitric oxide (NO) reductase, acts as a transcriptional activator for at least the norVW operon. Activation also requires sigma-54. The sequence is that of Anaerobic nitric oxide reductase transcription regulator NorR from Vibrio vulnificus (strain YJ016).